The chain runs to 317 residues: NAD-dependent protein deacetylase Sirt6 (317 aa).

The region spanning 27-273 (DEVVAEKCQE…SKVCKLLGVE (247 aa)) is the Deacetylase sirtuin-type domain. Residues Ala-53, Thr-57, Phe-64, Arg-65, Trp-71, Gln-113, and His-133 each coordinate NAD(+). His-133 serves as the catalytic Proton acceptor. 4 residues coordinate Zn(2+): Cys-141, Cys-144, Cys-166, and Cys-177. 4 residues coordinate NAD(+): Gly-215, Asn-241, Gln-243, and Val-259.

This sequence belongs to the sirtuin family. Class IV subfamily. Zn(2+) is required as a cofactor. Widely expressed.

Its subcellular location is the nucleus. It is found in the chromosome. It carries out the reaction N(6)-acetyl-L-lysyl-[protein] + NAD(+) + H2O = 2''-O-acetyl-ADP-D-ribose + nicotinamide + L-lysyl-[protein]. Its function is as follows. NAD-dependent histone deacylase that acts as a regulator of life span. In Drosophila melanogaster (Fruit fly), this protein is NAD-dependent protein deacetylase Sirt6.